The following is a 540-amino-acid chain: 2,3-bisphosphoglycerate-independent phosphoglycerate mutase (540 aa).

Mn(2+) contacts are provided by aspartate 13 and serine 63. Serine 63 (phosphoserine intermediate) is an active-site residue. Substrate-binding positions include histidine 124, 154–155 (RD), arginine 186, arginine 192, 262–265 (RPDR), and lysine 356. Mn(2+) contacts are provided by aspartate 423, histidine 427, aspartate 464, histidine 465, and histidine 483.

It belongs to the BPG-independent phosphoglycerate mutase family. As to quaternary structure, monomer. Mn(2+) serves as cofactor.

The enzyme catalyses (2R)-2-phosphoglycerate = (2R)-3-phosphoglycerate. Its pathway is carbohydrate degradation; glycolysis; pyruvate from D-glyceraldehyde 3-phosphate: step 3/5. Its function is as follows. Catalyzes the interconversion of 2-phosphoglycerate and 3-phosphoglycerate. The chain is 2,3-bisphosphoglycerate-independent phosphoglycerate mutase from Chloroflexus aggregans (strain MD-66 / DSM 9485).